The following is a 266-amino-acid chain: Isopentenyl phosphate kinase (266 aa).

An ATP-binding site is contributed by 5–9 (KLGGS). Alanine 47 contributes to the substrate binding site. Glycine 48 is a binding site for ATP. Substrate contacts are provided by histidine 52 and glycine 157. ATP is bound by residues aspartate 178, 183-188 (YTRNPK), glycine 219, and lysine 223.

This sequence belongs to the isopentenyl phosphate kinase family. In terms of assembly, homodimer.

The enzyme catalyses isopentenyl phosphate + ATP = isopentenyl diphosphate + ADP. In terms of biological role, catalyzes the formation of isopentenyl diphosphate (IPP), the building block of all isoprenoids. Has lower activity with dimethylallyl phosphate (DMAP) and isopentenyl thiolophosphate (ISP). Has low activity with 1-butyl phosphate (BP) and 3-buten-1-yl phosphate (BEP). Has no significant activity with geranyl phosphate (in vitro). The sequence is that of Isopentenyl phosphate kinase from Methanothermobacter thermautotrophicus (strain ATCC 29096 / DSM 1053 / JCM 10044 / NBRC 100330 / Delta H) (Methanobacterium thermoautotrophicum).